Here is an 810-residue protein sequence, read N- to C-terminus: Lon protease (810 aa).

One can recognise a Lon N-terminal domain in the interval 16-209; that stretch reads YPVPPLRDIV…RVYAFMEGEI (194 aa). 361–368 is an ATP binding site; it reads GPPGVGKT. The Lon proteolytic domain maps to 598-779; that stretch reads EDLVGVTTGL…DDVLKHALVR (182 aa). Active-site residues include serine 685 and lysine 728.

The protein belongs to the peptidase S16 family. In terms of assembly, homohexamer. Organized in a ring with a central cavity.

It is found in the cytoplasm. It carries out the reaction Hydrolysis of proteins in presence of ATP.. In terms of biological role, ATP-dependent serine protease that mediates the selective degradation of mutant and abnormal proteins as well as certain short-lived regulatory proteins. Required for cellular homeostasis and for survival from DNA damage and developmental changes induced by stress. Degrades polypeptides processively to yield small peptide fragments that are 5 to 10 amino acids long. Binds to DNA in a double-stranded, site-specific manner. Involved in iron uptake. The chain is Lon protease from Azospirillum brasilense.